The chain runs to 1301 residues: Dentin sialophosphoprotein (1301 aa).

Positions 1–15 are cleaved as a signal peptide; it reads MKIITYFCIWAVAWA. 2 N-linked (GlcNAc...) asparagine glycosylation sites follow: Asn-41 and Asn-49. The segment at 55–89 is disordered; sequence KESGVLVHEGDRGRQENTQDGHKGEGNGSKWAEVG. The span at 62 to 79 shows a compositional bias: basic and acidic residues; that stretch reads HEGDRGRQENTQDGHKGE. 7 N-linked (GlcNAc...) asparagine glycosylation sites follow: Asn-81, Asn-130, Asn-150, Asn-190, Asn-191, Asn-209, and Asn-222. A compositionally biased stretch (polar residues) spans 146–165; sequence AGATNRSNTNGNTDKNTQNG. Positions 146–171 are disordered; it reads AGATNRSNTNGNTDKNTQNGDVGDAG. Residues 202–1301 form a disordered region; it reads NSCRNEGNTS…SDSNHSTSDD (1100 aa). Positions 203–221 are enriched in polar residues; that stretch reads SCRNEGNTSEITPQINSKR. Over residues 251–267 the composition is skewed to acidic residues; that stretch reads ADEDEDEGSGDDEDEEA. Ser-259 is modified (phosphoserine; by CK1). The span at 271–280 shows a compositional bias: polar residues; it reads KDSSNNSKGQ. N-linked (GlcNAc...) asparagine glycosylation occurs at Asn-275. Basic and acidic residues-rich tracts occupy residues 281 to 293 and 300 to 327; these read EGQDHGKEDDHDS and DSKEYYDPEGKEDPHNEVDGDKTSKSEE. Residue Ser-301 is modified to Phosphoserine. A glycan (N-linked (GlcNAc...) asparagine) is linked at Asn-336. The segment covering 340–377 has biased composition (basic and acidic residues); sequence RIEDTQKLNHRESKRVENRITKESETHAVGKSQDKGIE. An N-linked (GlcNAc...) asparagine glycan is attached at Asn-387. Residues 388 to 404 show a composition bias toward basic and acidic residues; the sequence is ITKEVGKGNEGKEDKGQ. Composition is skewed to low complexity over residues 439–452 and 462–487; these read SNTGSDSNSDGYDS and GDDPNSSDESNGNDDANSESDNNSSS. Positions 488 to 490 match the Cell attachment site motif; that stretch reads RGD. The segment covering 488 to 506 has biased composition (polar residues); that stretch reads RGDASYNSDESKDNGNGSD. Over residues 518-534 the composition is skewed to low complexity; sequence TSDTNNSDSNGNGNNGN. Residues 536–549 show a composition bias toward basic and acidic residues; the sequence is DNDKSDSGKGKSDS. Low complexity predominate over residues 555-564; sequence SDSSNSSDSS. Residues 581-595 show a composition bias toward acidic residues; the sequence is DSSDSDSSDSSDSDS. Over residues 596–619 the composition is skewed to low complexity; the sequence is SDSSNSSDSSDSSDSSDSSDSSDS. The span at 620–642 shows a compositional bias: basic and acidic residues; that stretch reads SDSKSDSSKSESDSSDSDSKSDS. Composition is skewed to low complexity over residues 643-705, 715-1264, 1272-1284, and 1292-1301; these read SDSN…SDSS, SSDS…STSD, QSKSGNGNNNGSD, and SDSNHSTSDD.

In terms of assembly, interacts with FBLN7. In terms of processing, DSP is glycosylated. In terms of tissue distribution, expressed in teeth. DPP is synthesized by odontoblast and transiently expressed by pre-ameloblasts.

It is found in the secreted. The protein resides in the extracellular space. It localises to the extracellular matrix. DSP may be an important factor in dentinogenesis. DPP may bind high amount of calcium and facilitate initial mineralization of dentin matrix collagen as well as regulate the size and shape of the crystals. This is Dentin sialophosphoprotein (DSPP) from Homo sapiens (Human).